The chain runs to 149 residues: UPF0178 protein HEAR0259 (149 aa).

This sequence belongs to the UPF0178 family.

The sequence is that of UPF0178 protein HEAR0259 from Herminiimonas arsenicoxydans.